A 445-amino-acid chain; its full sequence is Putrescine hydroxycinnamoyltransferase 1 (445 aa).

Residues His154 and Asp388 each act as proton acceptor in the active site.

Belongs to the plant acyltransferase family. Expressed in leaves.

Functionally, hydroxycinnamoyl transferase that catalyzes the transfer of an acyl from p-coumaryol-CoA to putrescine, to produce coumaroyl putrescine. This chain is Putrescine hydroxycinnamoyltransferase 1, found in Oryza sativa subsp. japonica (Rice).